The sequence spans 391 residues: Terminal nucleotidyltransferase 5C (391 aa).

The protein belongs to the TENT family. As to quaternary structure, interacts with BCCIP and PABPC1; the interaction has no effect on TENT5C poly(A) polymerase function. Interacts with PLK4; this interaction leads to the TENT5C recruitment into the centrosome.

Its subcellular location is the nucleus. The protein resides in the cytoplasm. It is found in the cytoskeleton. The protein localises to the microtubule organizing center. It localises to the centrosome. It carries out the reaction RNA(n) + ATP = RNA(n)-3'-adenine ribonucleotide + diphosphate. Functionally, catalyzes the transfer of one adenosine molecule from an ATP to an mRNA poly(A) tail bearing a 3'-OH terminal group and enhances mRNA stability and gene expression. Can also elongate RNA oligos ending with uridine molecule, provided that the sequence is adenosine-rich. Mainly targets mRNAs encoding endoplasmic reticulum-targeted protein. This Rattus norvegicus (Rat) protein is Terminal nucleotidyltransferase 5C.